Here is a 295-residue protein sequence, read N- to C-terminus: tRNA pseudouridine synthase A (295 aa).

Residue Asp-67 is the Nucleophile of the active site. Tyr-125 serves as a coordination point for substrate.

The protein belongs to the tRNA pseudouridine synthase TruA family. As to quaternary structure, homodimer.

The catalysed reaction is uridine(38/39/40) in tRNA = pseudouridine(38/39/40) in tRNA. Its function is as follows. Formation of pseudouridine at positions 38, 39 and 40 in the anticodon stem and loop of transfer RNAs. The sequence is that of tRNA pseudouridine synthase A from Prochlorococcus marinus (strain MIT 9303).